Reading from the N-terminus, the 41-residue chain is Large ribosomal subunit protein bL36A (41 aa).

It belongs to the bacterial ribosomal protein bL36 family.

This Aeromonas salmonicida (strain A449) protein is Large ribosomal subunit protein bL36A.